Here is a 492-residue protein sequence, read N- to C-terminus: Rab5 GDP/GTP exchange factor (492 aa).

The segment at 1–74 is interaction with ubiquitinated proteins; the sequence is MSLKSERRGI…EEEAFASSQS (74 aa). An A20-type zinc finger spans residues 13–47; that stretch reads DQSELLCKKGCGYYGNPAWQGFCSKCWREEYHKAR. Zn(2+) contacts are provided by C19, C23, C35, and C38. A disordered region spans residues 66-85; the sequence is EEAFASSQSSQGAQSLTFSK. A compositionally biased stretch (low complexity) spans 69-84; that stretch reads FASSQSSQGAQSLTFS. Phosphoserine is present on residues S125 and S133. K152 and K171 each carry N6-acetyllysine. The 144-residue stretch at 233–376 folds into the VPS9 domain; it reads EKKDLAIQKR…IEKLDAQSLN (144 aa). 4 positions are modified to phosphoserine: S374, S378, S391, and S401. Residues 408–449 are a coiled coil; that stretch reads VKQMYKNLDLLSQLNERQERIMNEAKKLEKDLIDWTDGIAKE. Residues 471-492 form a disordered region; the sequence is IDSENVENDKLPPPLQPQVYAG.

As to quaternary structure, heterodimer with RABEP1. The heterodimer binds RAB4A and RAB5A that have been activated by GTP-binding. Binds TSC2, GGA1, GGA2, GGA3, AP1G1 and AP1G2. Interacts with RAB21, and with 100-fold lower affinity also with RAB22. Interacts with ubiquitinated EGFR. Interacts with RGS14; the interaction is GTP-dependent. Monoubiquitinated. Detected in brain.

It is found in the cytoplasm. The protein resides in the early endosome. The protein localises to the recycling endosome. In terms of biological role, rab effector protein acting as linker between gamma-adaptin and RAB5A. Involved in endocytic membrane fusion and membrane trafficking of recycling endosomes. Stimulates nucleotide exchange on RAB5A. Can act as a ubiquitin ligase. In Bos taurus (Bovine), this protein is Rab5 GDP/GTP exchange factor (RABGEF1).